Reading from the N-terminus, the 114-residue chain is Iron-sulfur cluster insertion protein ErpA (114 aa).

Iron-sulfur cluster-binding residues include C42, C106, and C108.

The protein belongs to the HesB/IscA family. In terms of assembly, homodimer. It depends on iron-sulfur cluster as a cofactor.

Functionally, required for insertion of 4Fe-4S clusters for at least IspG. The sequence is that of Iron-sulfur cluster insertion protein ErpA from Hamiltonella defensa subsp. Acyrthosiphon pisum (strain 5AT).